Here is a 111-residue protein sequence, read N- to C-terminus: UPF0060 membrane protein Cbei_2176 (111 aa).

4 consecutive transmembrane segments (helical) span residues 7–27 (ILYF…IWIW), 33–53 (SYLY…IPTL), 60–80 (FGKV…LWGW), and 85–105 (IVPD…VIVI).

It belongs to the UPF0060 family.

The protein resides in the cell membrane. The protein is UPF0060 membrane protein Cbei_2176 of Clostridium beijerinckii (strain ATCC 51743 / NCIMB 8052) (Clostridium acetobutylicum).